The chain runs to 140 residues: MAKKVIGEIKLQIAATKANPSPPVGPALGQKGVNIMEFCKAFNEKTKGMEGFNIPVIITVYADRSFTFITKQPPATDLIKKTAGVQKGSDNPLKNKVGKLTKAQVLEIVEKKMADLNTKDKEQAARIIAGSARSMGITVE.

Belongs to the universal ribosomal protein uL11 family. In terms of assembly, part of the ribosomal stalk of the 50S ribosomal subunit. Interacts with L10 and the large rRNA to form the base of the stalk. L10 forms an elongated spine to which L12 dimers bind in a sequential fashion forming a multimeric L10(L12)X complex. One or more lysine residues are methylated.

Functionally, forms part of the ribosomal stalk which helps the ribosome interact with GTP-bound translation factors. This chain is Large ribosomal subunit protein uL11, found in Campylobacter hominis (strain ATCC BAA-381 / DSM 21671 / CCUG 45161 / LMG 19568 / NCTC 13146 / CH001A).